A 701-amino-acid chain; its full sequence is Polyribonucleotide nucleotidyltransferase (701 aa).

Positions 487 and 493 each coordinate Mg(2+). Positions 554–613 (PTMIAMKIDTDKIRDVIGKGGATIRAICEETKASIDIEDDGSIKIFGETKEAADAAKQRI) constitute a KH domain. The S1 motif domain maps to 623-691 (GKIYVGKVER…NRGRIKLSIK (69 aa)).

It belongs to the polyribonucleotide nucleotidyltransferase family. Component of the RNA degradosome, which is a multiprotein complex involved in RNA processing and mRNA degradation. It depends on Mg(2+) as a cofactor.

It is found in the cytoplasm. It catalyses the reaction RNA(n+1) + phosphate = RNA(n) + a ribonucleoside 5'-diphosphate. In terms of biological role, involved in mRNA degradation. Catalyzes the phosphorolysis of single-stranded polyribonucleotides processively in the 3'- to 5'-direction. In Pseudomonas putida (strain ATCC 47054 / DSM 6125 / CFBP 8728 / NCIMB 11950 / KT2440), this protein is Polyribonucleotide nucleotidyltransferase.